The following is a 304-amino-acid chain: Nod factor export ATP-binding protein I (304 aa).

Residues 6–236 enclose the ABC transporter domain; sequence IDFQQVEKRY…EIGCDVIEIY (231 aa). Residue 38 to 45 coordinates ATP; it reads GPNGAGKT.

Belongs to the ABC transporter superfamily. Lipooligosaccharide exporter (TC 3.A.1.102) family. In terms of assembly, the complex is composed of two ATP-binding proteins (NodI) and two transmembrane proteins (NodJ).

The protein localises to the cell inner membrane. In terms of biological role, part of the ABC transporter complex NodIJ involved in the export of the nodulation factors (Nod factors), the bacterial signal molecules that induce symbiosis and subsequent nodulation induction. Nod factors are LCO (lipo-chitin oligosaccharide), a modified beta-1,4-linked N-acetylglucosamine oligosaccharide. This subunit is responsible for energy coupling to the transport system. This Burkholderia thailandensis (strain ATCC 700388 / DSM 13276 / CCUG 48851 / CIP 106301 / E264) protein is Nod factor export ATP-binding protein I.